Consider the following 1132-residue polypeptide: SNF2 domain-containing protein CLASSY 4 (1132 aa).

Disordered stretches follow at residues 24–104, 224–331, 376–396, and 525–544; these read NKSK…SKSF, LRGE…HHKK, DPVV…PRER, and PSVN…LPNR. The short motif at 47-54 is the Nuclear localization signal element; sequence KRRVNMRD. A compositionally biased stretch (basic and acidic residues) spans 81 to 90; that stretch reads EYPEGKRDDE. Polar residues predominate over residues 92 to 103; that stretch reads VGSTSGNLQSKS. The segment covering 233–242 has biased composition (low complexity); that stretch reads SDEVVSLSSS. Acidic residues predominate over residues 243-254; sequence SDDEEDPLEELG. Residues 255–269 show a composition bias toward basic and acidic residues; that stretch reads TDSREEVSGEDRDSG. 2 stretches are compositionally biased toward acidic residues: residues 270-282 and 291-309; these read ESDM…DSDS and DSSD…EDEE. Composition is skewed to basic and acidic residues over residues 310–326, 376–392, and 525–539; these read GGTR…SEKV, DPVV…EHGK, and PSVN…RKGD. In terms of domain architecture, Helicase ATP-binding spans 603-796; that stretch reads SVGVKGSGGC…SNVLCLARPA (194 aa). 616–623 lines the ATP pocket; sequence HKAGTGKT. A DEAH box motif is present at residues 747 to 750; sequence DEGH. The Helicase C-terminal domain maps to 934–1087; the sequence is DFIRISGTVK…ELVFSSTNEK (154 aa).

Belongs to the SNF2/RAD54 helicase family. As to quaternary structure, interacts with NRPD1.

The protein resides in the nucleus. In terms of biological role, probable chromatin remodeling factor. This is SNF2 domain-containing protein CLASSY 4 (CLSY4) from Arabidopsis thaliana (Mouse-ear cress).